Reading from the N-terminus, the 332-residue chain is D-2-hydroxyacid dehydrogenase (NAD(+)) (332 aa).

Residues Arg-237 and Glu-266 contribute to the active site. Residue His-298 is the Proton donor of the active site.

This sequence belongs to the D-isomer specific 2-hydroxyacid dehydrogenase family. In terms of assembly, monomer.

The enzyme catalyses a (2R)-2-hydroxycarboxylate + NAD(+) = a 2-oxocarboxylate + NADH + H(+). It catalyses the reaction (2R)-hydroxy-4-methylpentanoate + NAD(+) = 4-methyl-2-oxopentanoate + NADH + H(+). It functions in the pathway amino-acid degradation; L-leucine degradation. In terms of biological role, involved in the reductive branch of L-leucine fermentation. Catalyzes the NADH-dependent reduction of 4-methyl-2-oxopentanoate (2-oxoisocaproate) to (R)-2-hydroxy-4-methylpentanoate ((R)-2-hydroxyisocaproate). For the reverse reaction, the enzyme accepts (R)- but not (S)-2-hydroxy-4-methylpentanoate. Can also use 2-oxopentanoate, 2-oxohexanoate and phenylpyruvate but not 2-oxoisovalerate and 2-oxobutyrate. Cannot use NADPH. The sequence is that of D-2-hydroxyacid dehydrogenase (NAD(+)) from Clostridioides difficile (Peptoclostridium difficile).